The following is a 249-amino-acid chain: MKKIELGHHSEAAKPDCIKALIVEFITTFLFVFAGVGSAMATDSLVGNTLVGLFAVAVAHAFVVAVMISAGHISGGHLNPAVTLGLLLGGHISVFRAFLYWIDQLLASSAACFLLSYLTGGMGTPVHTLASGVSYTQGIIWEIILTFSLLFTVYATIVDPKKGSLDGFGPLLTGFVVGANILAGGAFSGASMNPARSFGPALVSGNWTDHWVYWVGPLIGGGLAGFIYENVLIDRPHVPVADDEQPLLN.

The residue at position 1 (Met1) is an N-acetylmethionine. The Cytoplasmic portion of the chain corresponds to Met1–Ala20. Position 3 is an N6,N6-dimethyllysine (Lys3). The chain crosses the membrane as a helical span at residues Leu21–Ala41. At Thr42–Thr49 the chain is on the vacuolar side. Residues Leu50–Ala70 form a helical membrane-spanning segment. Residues Gly71–Leu105 lie on the Cytoplasmic side of the membrane. The NPA 1 motif lies at Asn79 to Ala81. Residues Leu106–Val126 form a helical membrane-spanning segment. Over His127–Gln137 the chain is Vacuolar. Residues Gly138 to Val158 form a helical membrane-spanning segment. The Cytoplasmic segment spans residues Asp159 to Asp166. Residues Gly167 to Phe187 form a helical membrane-spanning segment. At Ser188 to Val212 the chain is on the vacuolar side. The NPA 2 signature appears at Asn193 to Ala195. The helical transmembrane segment at Tyr213 to Ile233 threads the bilayer. Residues Asp234–Asn249 are Cytoplasmic-facing.

Belongs to the MIP/aquaporin (TC 1.A.8) family. TIP (TC 1.A.8.10) subfamily. Expressed in roots.

It localises to the vacuole membrane. Aquaporins facilitate the transport of water and small neutral solutes across cell membranes. Transports urea in yeast cells in a pH-independent manner. The sequence is that of Aquaporin TIP4-1 (TIP4-1) from Arabidopsis thaliana (Mouse-ear cress).